The following is a 254-amino-acid chain: tRNA (guanine-N(1)-)-methyltransferase (254 aa).

Residues Gly112 and 131 to 136 contribute to the S-adenosyl-L-methionine site; that span reads IGDFIL.

It belongs to the RNA methyltransferase TrmD family. As to quaternary structure, homodimer.

The protein localises to the cytoplasm. The enzyme catalyses guanosine(37) in tRNA + S-adenosyl-L-methionine = N(1)-methylguanosine(37) in tRNA + S-adenosyl-L-homocysteine + H(+). Its function is as follows. Specifically methylates guanosine-37 in various tRNAs. The chain is tRNA (guanine-N(1)-)-methyltransferase from Persephonella marina (strain DSM 14350 / EX-H1).